The sequence spans 339 residues: Probable G-protein coupled receptor 33 (339 aa).

Residues 1 to 30 lie on the Extracellular side of the membrane; it reads MDRVNSSGHVISVSPSLTNSTGVPTPAPKA. Residues Asn5 and Asn19 are each glycosylated (N-linked (GlcNAc...) asparagine). The helical transmembrane segment at 31–53 threads the bilayer; the sequence is IIAAALFMSFIVGTISNGLYLWM. The Cytoplasmic segment spans residues 54 to 64; the sequence is LKFKMQRTVNT. Residues 65 to 86 form a helical membrane-spanning segment; the sequence is LLFFHLILSYFISTLILPFMAT. Over 87 to 103 the chain is Extracellular; it reads SFLQDNHWAFGSVLCKV. Cys101 and Cys179 form a disulfide bridge. The helical transmembrane segment at 104–124 threads the bilayer; the sequence is FNSTLSVSMFASVFFLSAISV. Topologically, residues 125–143 are cytoplasmic; sequence DRYHLTLHPVWSQQHRTPR. The helical transmembrane segment at 144 to 165 threads the bilayer; the sequence is WASRIALRIWILATILSIPYLV. Residues 166–209 lie on the Extracellular side of the membrane; the sequence is FRETHDDHKGRIKCQNNYIVGTNWESSEHQTLGQWIHAACFGRR. Residues 210–230 form a helical membrane-spanning segment; sequence FLLGFLLPFLVIVFCYKRVAT. Topologically, residues 231-246 are cytoplasmic; it reads KMKDKGLFKSSKPFKV. A helical transmembrane segment spans residues 247 to 268; the sequence is MLTAVVSFFVCWMPYHVHSGLV. The Extracellular segment spans residues 269–283; it reads LTKSQPLPSQLTLGL. A helical transmembrane segment spans residues 284 to 303; sequence AVVTISFNTVVSPILYLFTG. Residues 304-339 lie on the Cytoplasmic side of the membrane; the sequence is ENFEVFKKSILALFKSTFSDSSATERTQTLNSETEI.

It belongs to the G-protein coupled receptor 1 family.

It is found in the cell membrane. In terms of biological role, orphan receptor; could be a chemoattractant receptor. The polypeptide is Probable G-protein coupled receptor 33 (Gpr33) (Rattus rattus (Black rat)).